The sequence spans 1821 residues: PH-interacting protein (1821 aa).

Phosphoserine is present on S136. WD repeat units lie at residues 181 to 222, 224 to 262, 265 to 310, 319 to 360, and 363 to 402; these read GHLS…ATLR, HAAEISDMAVNYENTMIAAGSCDKMIRVWCLRTCAPLAV, GHSA…INPR, RPGV…KISE, and FHTDKVDSIQFSNTSNRFVSGSRDGTARIWQFKRREWKSI. K421 participates in a covalent cross-link: Glycyl lysine isopeptide (Lys-Gly) (interchain with G-Cter in SUMO2). 3 WD repeats span residues 422–461, 464–504, and 512–551; these read ITKMKVTMVAWDRHDNTVITAVNNMTLKVWNSYTGQLIHV, GHED…KVRS, and QGHGAVFDCKCSPDGQHFACTDSHGHLLIFGFGSSSKYDK. Residues S641, S659, S674, S677, S683, and S692 each carry the phosphoserine modification. Disordered regions lie at residues 653-695 and 782-927; these read EQDL…SGQI and DLGD…RLAV. Residues 665–681 show a composition bias toward polar residues; it reads SNASRVNRGSVSSTSEV. Basic and acidic residues predominate over residues 800 to 810; that stretch reads SALEETPRPLE. Residues 841–854 are compositionally biased toward low complexity; sequence SDGSSSDYSSDYSD. S879, S880, S881, and S911 each carry phosphoserine. Basic residues predominate over residues 912-924; it reads PKKKKPKERKQKR. Residues 924–1129 are mediates interaction with IRS1; the sequence is RLAVGELTEN…MELIPNNAVF (206 aa). The 108-residue stretch at 1156-1263 folds into the Bromo 1 domain; sequence WGANPRDEEC…DLLLHFIKDQ (108 aa). Phosphoserine is present on residues S1281, S1283, and S1296. The tract at residues 1282–1310 is disordered; it reads DSEEEEKDADVPGTSTRKRKDHQPRRRLR. The segment covering 1297-1310 has biased composition (basic residues); sequence TRKRKDHQPRRRLR. A Phosphoserine modification is found at S1315. Residues 1316–1421 enclose the Bromo 2 domain; the sequence is YDIQAWKKQC…AFFEEHISSV (106 aa). At T1359 the chain carries Phosphothreonine. S1405 carries the phosphoserine modification. Residues 1435–1446 show a composition bias toward basic residues; that stretch reads NTISKKRKKRNR. Residues 1435–1507 form a disordered region; the sequence is NTISKKRKKR…PESSSVVRTR (73 aa). A compositionally biased stretch (low complexity) spans 1447 to 1457; that stretch reads SSSLSSSAASS. K1470 participates in a covalent cross-link: Glycyl lysine isopeptide (Lys-Gly) (interchain with G-Cter in SUMO1); alternate. K1470 is covalently cross-linked (Glycyl lysine isopeptide (Lys-Gly) (interchain with G-Cter in SUMO2); alternate). The segment covering 1471–1482 has biased composition (polar residues); sequence SEVSTSPFSIPT. Position 1479 is a phosphoserine (S1479). K1497 carries the post-translational modification N6-acetyllysine. S1525 is subject to Phosphoserine. Residue K1533 is modified to N6-acetyllysine. Positions 1556–1576 are enriched in polar residues; sequence STLSSPDPLTFSHATKNNSAK. Disordered regions lie at residues 1556 to 1596, 1623 to 1676, and 1740 to 1785; these read STLS…VFSK, QVNG…NSEQ, and RSNR…DSEE. S1560 is modified (phosphoserine). K1644 is covalently cross-linked (Glycyl lysine isopeptide (Lys-Gly) (interchain with G-Cter in SUMO2)). S1651 bears the Phosphoserine mark. A Glycyl lysine isopeptide (Lys-Gly) (interchain with G-Cter in SUMO2) cross-link involves residue K1670. Residues S1762 and S1783 each carry the phosphoserine modification.

As to quaternary structure, interacts (via bromo domain) with acetylated lysine residues on histone H1.4, histone H3 and H4 (in vitro). Interacts with IRS1 and IRS2. As to expression, widely expressed with most abundant expression detected in pancreatic islets, brain and skeletal muscle. Predominantly expressed in developing and regenerating neurons. Expressed in adult brain (granular layer of the olfactorium bulb, hippocampus, dentate gyrus and cerebellum internal granular layer). Expressed in the CA3 region of adult hippocampus, adult and fetal retina, perinatal dorsal root ganglion and embryonal olfactory epithelia (at protein level).

The protein resides in the nucleus. Functionally, probable regulator of the insulin and insulin-like growth factor signaling pathways. Stimulates cell proliferation through regulation of cyclin transcription and has an anti-apoptotic activity through AKT1 phosphorylation and activation. Plays a role in the regulation of cell morphology and cytoskeletal organization. The chain is PH-interacting protein (Phip) from Mus musculus (Mouse).